The primary structure comprises 201 residues: 3-isopropylmalate dehydratase small subunit (201 aa).

This sequence belongs to the LeuD family. LeuD type 1 subfamily. In terms of assembly, heterodimer of LeuC and LeuD.

The enzyme catalyses (2R,3S)-3-isopropylmalate = (2S)-2-isopropylmalate. It participates in amino-acid biosynthesis; L-leucine biosynthesis; L-leucine from 3-methyl-2-oxobutanoate: step 2/4. In terms of biological role, catalyzes the isomerization between 2-isopropylmalate and 3-isopropylmalate, via the formation of 2-isopropylmaleate. This Agrobacterium fabrum (strain C58 / ATCC 33970) (Agrobacterium tumefaciens (strain C58)) protein is 3-isopropylmalate dehydratase small subunit.